The primary structure comprises 87 residues: UPF0367 protein Pro_0144 (87 aa).

The protein belongs to the UPF0367 family.

This chain is UPF0367 protein Pro_0144, found in Prochlorococcus marinus (strain SARG / CCMP1375 / SS120).